Here is a 341-residue protein sequence, read N- to C-terminus: Anthranilate phosphoribosyltransferase (341 aa).

5-phospho-alpha-D-ribose 1-diphosphate-binding positions include Gly81, 84 to 85, Thr89, 91 to 94, 109 to 117, and Thr121; these read GD, NIST, and KHGNRKASS. Gly81 is a binding site for anthranilate. Ser93 lines the Mg(2+) pocket. Position 112 (Asn112) interacts with anthranilate. Arg167 contacts anthranilate. Residues Asp226 and Glu227 each contribute to the Mg(2+) site.

Belongs to the anthranilate phosphoribosyltransferase family. In terms of assembly, homodimer. Requires Mg(2+) as cofactor.

The enzyme catalyses N-(5-phospho-beta-D-ribosyl)anthranilate + diphosphate = 5-phospho-alpha-D-ribose 1-diphosphate + anthranilate. It functions in the pathway amino-acid biosynthesis; L-tryptophan biosynthesis; L-tryptophan from chorismate: step 2/5. Its function is as follows. Catalyzes the transfer of the phosphoribosyl group of 5-phosphorylribose-1-pyrophosphate (PRPP) to anthranilate to yield N-(5'-phosphoribosyl)-anthranilate (PRA). The protein is Anthranilate phosphoribosyltransferase of Parvibaculum lavamentivorans (strain DS-1 / DSM 13023 / NCIMB 13966).